We begin with the raw amino-acid sequence, 168 residues long: Outer-membrane lipoprotein YfiB (168 aa).

A signal peptide spans 1–25; it reads MLPQRLHPSRLLALALFSLVLGLAG. The N-palmitoyl cysteine moiety is linked to residue Cys-26. The S-diacylglycerol cysteine moiety is linked to residue Cys-26. An OmpA-like domain is found at 53–168; that stretch reads EGWEFGMSSK…RRVAIIVPAE (116 aa).

The protein belongs to the outer membrane OOP (TC 1.B.6) superfamily. Homodimer. Interacts with YfiR. The YfiB-YfiR complex is a 2:2 heterotetramer.

It is found in the cell outer membrane. Its activity is regulated as follows. Both lipid anchor in the outer membrane and peptidoglycan binding are required for full activity. Once activated by certain cell stress, the dimeric YfiB transforms from a compact conformation to a stretched conformation, allowing the periplasmic domain of the membrane-anchored YfiB to penetrate the cell wall and sequester the YfiR dimer. GMP enhances the binding affinity between YfiB and YfiR. In terms of biological role, activates the diguanylate cyclase TpbB/YfiN by sequestering YfiR at the outer membrane, which counteracts the YfiR-mediated repression of TpbB/YfiN at the inner membrane and leads to increased c-di-GMP production. May act as a sensor of envelope stress. Its function is as follows. Part of the YfiB-TpbB-YfiR (or yfiBNR) system, encoding a tripartite signaling module that modulates intracellular c-di-GMP levels. The system is a key regulator of the small colony variant (SCV) phenotype, and plays an important role in biofilm formation and in vivo persistence. The c-di-GMP produced by TpbB/YfiN stimulates the production of the Pel and Psl exopolysaccharides, which promotes surface attachment, generates an SCV phenotype and confers resistance against phagocytosis. In Pseudomonas aeruginosa (strain ATCC 15692 / DSM 22644 / CIP 104116 / JCM 14847 / LMG 12228 / 1C / PRS 101 / PAO1), this protein is Outer-membrane lipoprotein YfiB.